We begin with the raw amino-acid sequence, 120 residues long: Non-specific lipid-transfer protein 2 (120 aa).

The signal sequence occupies residues 1 to 25; that stretch reads MATSMKLACVALVMCMVVIAPMAEA. 4 disulfides stabilise this stretch: cysteine 29–cysteine 78, cysteine 39–cysteine 55, cysteine 56–cysteine 101, and cysteine 76–cysteine 115.

Belongs to the plant LTP family. Expressed in roots, stem, leaves and tendrils of the mature plant.

Plant non-specific lipid-transfer proteins transfer phospholipids as well as galactolipids across membranes. May play a role in wax or cutin deposition in the cell walls of expanding epidermal cells and certain secretory tissues. This Pisum sativum (Garden pea) protein is Non-specific lipid-transfer protein 2.